The chain runs to 339 residues: Phosphate acyltransferase (339 aa).

Belongs to the PlsX family. In terms of assembly, homodimer. Probably interacts with PlsY.

Its subcellular location is the cytoplasm. It carries out the reaction a fatty acyl-[ACP] + phosphate = an acyl phosphate + holo-[ACP]. It participates in lipid metabolism; phospholipid metabolism. Its function is as follows. Catalyzes the reversible formation of acyl-phosphate (acyl-PO(4)) from acyl-[acyl-carrier-protein] (acyl-ACP). This enzyme utilizes acyl-ACP as fatty acyl donor, but not acyl-CoA. This is Phosphate acyltransferase from Dechloromonas aromatica (strain RCB).